The primary structure comprises 167 residues: Small ribosomal subunit protein uS5 (167 aa).

Residues 11 to 74 form the S5 DRBM domain; it reads LQEKLIAVNR…EKARRNMINV (64 aa).

It belongs to the universal ribosomal protein uS5 family. As to quaternary structure, part of the 30S ribosomal subunit. Contacts proteins S4 and S8.

With S4 and S12 plays an important role in translational accuracy. Its function is as follows. Located at the back of the 30S subunit body where it stabilizes the conformation of the head with respect to the body. The sequence is that of Small ribosomal subunit protein uS5 from Shigella dysenteriae serotype 1 (strain Sd197).